Here is a 379-residue protein sequence, read N- to C-terminus: Pathogen-associated molecular patterns-induced protein A70 (379 aa).

The chain crosses the membrane as a helical span at residues V7–V29. A glycan (N-linked (GlcNAc...) asparagine) is linked at N122. A disordered region spans residues T133–A154. Residues P137 to P149 show a composition bias toward basic and acidic residues. Residue N170 is glycosylated (N-linked (GlcNAc...) asparagine). 2 disordered regions span residues P216–A238 and S256–D347. The span at P221–N231 shows a compositional bias: polar residues. 2 stretches are compositionally biased toward basic and acidic residues: residues S256–K285 and S322–R335.

Its subcellular location is the membrane. The protein is Pathogen-associated molecular patterns-induced protein A70 of Arabidopsis thaliana (Mouse-ear cress).